We begin with the raw amino-acid sequence, 340 residues long: Fructose-1,6-bisphosphatase class 1 (340 aa).

Mg(2+)-binding residues include glutamate 107, aspartate 126, leucine 128, and aspartate 129. Asparagine 215 contributes to the substrate binding site. Residue glutamate 287 coordinates Mg(2+).

The protein belongs to the FBPase class 1 family. As to quaternary structure, homotetramer. The cofactor is Mg(2+).

It is found in the cytoplasm. It catalyses the reaction beta-D-fructose 1,6-bisphosphate + H2O = beta-D-fructose 6-phosphate + phosphate. It functions in the pathway carbohydrate biosynthesis; gluconeogenesis. The chain is Fructose-1,6-bisphosphatase class 1 from Brucella suis (strain ATCC 23445 / NCTC 10510).